A 520-amino-acid chain; its full sequence is Ribonuclease Y 2 (520 aa).

Residues 7–23 (VVLLLASIGVGYGLRAK) form a helical membrane-spanning segment. Positions 206 to 269 (NHRSFIAENA…AVAMETMEMI (64 aa)) constitute a KH domain. Positions 332 to 425 (ILEHSIETAK…VEAADAISGA (94 aa)) constitute an HD domain.

This sequence belongs to the RNase Y family.

It is found in the cell membrane. Its function is as follows. Endoribonuclease that initiates mRNA decay. The polypeptide is Ribonuclease Y 2 (Pediococcus pentosaceus (strain ATCC 25745 / CCUG 21536 / LMG 10740 / 183-1w)).